A 468-amino-acid polypeptide reads, in one-letter code: 3-isopropylmalate dehydratase large subunit (468 aa).

The [4Fe-4S] cluster site is built by Cys-347, Cys-407, and Cys-410.

This sequence belongs to the aconitase/IPM isomerase family. LeuC type 1 subfamily. In terms of assembly, heterodimer of LeuC and LeuD. Requires [4Fe-4S] cluster as cofactor.

The catalysed reaction is (2R,3S)-3-isopropylmalate = (2S)-2-isopropylmalate. It functions in the pathway amino-acid biosynthesis; L-leucine biosynthesis; L-leucine from 3-methyl-2-oxobutanoate: step 2/4. In terms of biological role, catalyzes the isomerization between 2-isopropylmalate and 3-isopropylmalate, via the formation of 2-isopropylmaleate. This Synechococcus sp. (strain CC9311) protein is 3-isopropylmalate dehydratase large subunit.